The following is a 440-amino-acid chain: Light-independent protochlorophyllide reductase subunit B (440 aa).

Position 36 (Asp-36) interacts with [4Fe-4S] cluster. Residue 427–428 coordinates substrate; the sequence is KD.

Belongs to the ChlB/BchB/BchZ family. Protochlorophyllide reductase is composed of three subunits; ChlL, ChlN and ChlB. Forms a heterotetramer of two ChlB and two ChlN subunits. It depends on [4Fe-4S] cluster as a cofactor.

Its subcellular location is the plastid. The protein localises to the cyanelle. The enzyme catalyses chlorophyllide a + oxidized 2[4Fe-4S]-[ferredoxin] + 2 ADP + 2 phosphate = protochlorophyllide a + reduced 2[4Fe-4S]-[ferredoxin] + 2 ATP + 2 H2O. Its pathway is porphyrin-containing compound metabolism; chlorophyll biosynthesis (light-independent). Functionally, component of the dark-operative protochlorophyllide reductase (DPOR) that uses Mg-ATP and reduced ferredoxin to reduce ring D of protochlorophyllide (Pchlide) to form chlorophyllide a (Chlide). This reaction is light-independent. The NB-protein (ChlN-ChlB) is the catalytic component of the complex. In Cyanophora paradoxa, this protein is Light-independent protochlorophyllide reductase subunit B.